We begin with the raw amino-acid sequence, 75 residues long: ORF2p protein (75 aa).

The tract at residues 13–18 is important for viral replication in intestinal cells; that stretch reads WIGHPV. Positions 23-45 form a transmembrane segment; it reads IVYLFVGFTPLTLETLHTLNYII. The disordered stretch occupies residues 53 to 75; that stretch reads APRSPHSDPARMRIPTQPRKAPL.

It is found in the host cytoplasmic vesicle membrane. Facilitates virus release from intestinal cells in vitro, possibly through the host autophagic pathway. The chain is ORF2p protein from Human enterovirus 71 (strain USA/BrCr/1970) (EV71).